A 439-amino-acid chain; its full sequence is Putative porin QuiX (439 aa).

The N-terminal stretch at 1 to 22 is a signal peptide; that stretch reads MRHFFKLGLVSAAVLGSQMTLA.

Belongs to the OprB family.

It is found in the cell outer membrane. Its function is as follows. Could be involved in the transport of quinate or shikimate. This is Putative porin QuiX (quiX) from Acinetobacter baylyi (strain ATCC 33305 / BD413 / ADP1).